A 270-amino-acid polypeptide reads, in one-letter code: Urease accessory protein UreD (270 aa).

This sequence belongs to the UreD family. As to quaternary structure, ureD, UreF and UreG form a complex that acts as a GTP-hydrolysis-dependent molecular chaperone, activating the urease apoprotein by helping to assemble the nickel containing metallocenter of UreC. The UreE protein probably delivers the nickel.

It localises to the cytoplasm. Required for maturation of urease via the functional incorporation of the urease nickel metallocenter. This Actinobacillus pleuropneumoniae serotype 5b (strain L20) protein is Urease accessory protein UreD.